The following is a 148-amino-acid chain: UPF0756 membrane protein YeaL (148 aa).

The next 4 helical transmembrane spans lie at 14–34 (ALGF…LIIV), 51–71 (LSIG…SGTL), 86–106 (LVAI…VTLM), and 112–132 (LVAG…GVPV).

The protein belongs to the UPF0756 family.

It is found in the cell membrane. The sequence is that of UPF0756 membrane protein YeaL from Escherichia coli O157:H7.